Reading from the N-terminus, the 184-residue chain is Ribosome-recycling factor (184 aa).

This sequence belongs to the RRF family.

It is found in the cytoplasm. In terms of biological role, responsible for the release of ribosomes from messenger RNA at the termination of protein biosynthesis. May increase the efficiency of translation by recycling ribosomes from one round of translation to another. This chain is Ribosome-recycling factor, found in Desulfotalea psychrophila (strain LSv54 / DSM 12343).